We begin with the raw amino-acid sequence, 316 residues long: Very-long-chain 3-oxooacyl-coA reductase let-767 (316 aa).

NADP(+) contacts are provided by residues isoleucine 52 to threonine 80 and aspartate 106. Residue serine 189 participates in substrate binding. Tyrosine 202 functions as the Proton acceptor in the catalytic mechanism. Lysine 206 serves as a coordination point for NADP(+).

The protein belongs to the short-chain dehydrogenases/reductases (SDR) family. 17-beta-HSD 3 subfamily.

It catalyses the reaction a very-long-chain (3R)-3-hydroxyacyl-CoA + NADP(+) = a very-long-chain 3-oxoacyl-CoA + NADPH + H(+). It functions in the pathway lipid metabolism; fatty acid biosynthesis. Required for branched chain fatty acid synthesis. Catalyzes the reduction of the 3-ketoacyl-CoA intermediate that is formed in each cycle of fatty acid elongation. Very long-chain fatty acids (VLCFAs) serve as precursors for ceramide and sphingolipids. May also be required for sterol hormone production. This is Very-long-chain 3-oxooacyl-coA reductase let-767 from Caenorhabditis briggsae.